Here is a 435-residue protein sequence, read N- to C-terminus: Proline and serine-rich protein 2 (435 aa).

The segment covering 1–10 (MPVTHRKSDA) has biased composition (basic and acidic residues). Residues 1–22 (MPVTHRKSDASDMNSDTSPSCR) are disordered. The residue at position 8 (Ser-8) is a Phosphoserine. Residues 11-20 (SDMNSDTSPS) show a composition bias toward polar residues. Ser-43 carries the post-translational modification Phosphoserine. Thr-45 carries the post-translational modification Phosphothreonine. 2 stretches are compositionally biased toward low complexity: residues 92 to 102 (PSLEESTSSPS) and 113 to 126 (PAPG…LPEG). Disordered stretches follow at residues 92 to 276 (PSLE…RAAV) and 295 to 420 (AFPA…SEEA). Thr-146 carries the post-translational modification Phosphothreonine. Residues 146 to 169 (TPPPPDPPAPETLLAPPPLPSTPD) are compositionally biased toward pro residues. Ser-166 is subject to Phosphoserine. Thr-167 is subject to Phosphothreonine. Residues Ser-179, Ser-212, and Ser-215 each carry the phosphoserine modification. Low complexity predominate over residues 228–237 (PAARGPRSGD). Residue Arg-252 is modified to Asymmetric dimethylarginine; alternate. An Omega-N-methylarginine; alternate modification is found at Arg-252. Residues 302 to 311 (AGEGAPGGGS) are compositionally biased toward gly residues. Ser-312 carries the phosphoserine modification. The residue at position 320 (Arg-320) is an Omega-N-methylarginine; alternate. Arg-320 is modified (dimethylated arginine; alternate). Arg-378 is modified (omega-N-methylarginine). Residue Ser-400 is modified to Phosphoserine. At Arg-414 the chain carries Omega-N-methylarginine.

The chain is Proline and serine-rich protein 2 (PROSER2) from Homo sapiens (Human).